A 180-amino-acid polypeptide reads, in one-letter code: ATP synthase subunit delta, chloroplastic (180 aa).

It belongs to the ATPase delta chain family. As to quaternary structure, F-type ATPases have 2 components, F(1) - the catalytic core - and F(0) - the membrane proton channel. F(1) has five subunits: alpha(3), beta(3), gamma(1), delta(1), epsilon(1). CF(0) has four main subunits: a(1), b(1), b'(1) and c(10-14). The alpha and beta chains form an alternating ring which encloses part of the gamma chain. F(1) is attached to F(0) by a central stalk formed by the gamma and epsilon chains, while a peripheral stalk is formed by the delta, b and b' chains.

The protein resides in the plastid. It localises to the chloroplast thylakoid membrane. F(1)F(0) ATP synthase produces ATP from ADP in the presence of a proton or sodium gradient. F-type ATPases consist of two structural domains, F(1) containing the extramembraneous catalytic core and F(0) containing the membrane proton channel, linked together by a central stalk and a peripheral stalk. During catalysis, ATP synthesis in the catalytic domain of F(1) is coupled via a rotary mechanism of the central stalk subunits to proton translocation. Its function is as follows. This protein is part of the stalk that links CF(0) to CF(1). It either transmits conformational changes from CF(0) to CF(1) or is implicated in proton conduction. The protein is ATP synthase subunit delta, chloroplastic of Rhodomonas salina (Cryptomonas salina).